The primary structure comprises 185 residues: Elongation factor P (185 aa).

It belongs to the elongation factor P family.

The protein resides in the cytoplasm. Its pathway is protein biosynthesis; polypeptide chain elongation. Its function is as follows. Involved in peptide bond synthesis. Stimulates efficient translation and peptide-bond synthesis on native or reconstituted 70S ribosomes in vitro. Probably functions indirectly by altering the affinity of the ribosome for aminoacyl-tRNA, thus increasing their reactivity as acceptors for peptidyl transferase. The polypeptide is Elongation factor P (Pseudothermotoga lettingae (strain ATCC BAA-301 / DSM 14385 / NBRC 107922 / TMO) (Thermotoga lettingae)).